Reading from the N-terminus, the 319-residue chain is Bidirectional sugar transporter SWEET15 (319 aa).

Topologically, residues 1 to 10 (MAFMSMERST) are extracellular. A helical transmembrane segment spans residues 11–31 (WAFTFGILGNLISLMVFLSPL). The region spanning 13-99 (FTFGILGNLI…AMYLAYAPKS (87 aa)) is the MtN3/slv 1 domain. Residues 32–50 (PTFYRVYRKKSTEGFQSTP) are Cytoplasmic-facing. Residues 51-71 (YVVTLFSCMLWMYYAFVKSGA) form a helical membrane-spanning segment. Residue Glu72 is a topological domain, extracellular. The chain crosses the membrane as a helical span at residues 73–93 (LLVTINGVGCVIETVYLAMYL). The Cytoplasmic segment spans residues 94-106 (AYAPKSARMLTAK). A helical membrane pass occupies residues 107–127 (MLLGLNIGLFGVIALVTLLLS). At 128–134 (RGELRVH) the chain is on the extracellular side. The chain crosses the membrane as a helical span at residues 135-155 (VLGWICVAVSLSVFAAPLSII). Residues 135-219 (VLGWICVAVS…ALYMAYRSKK (85 aa)) form the MtN3/slv 2 domain. Residues 156 to 167 (RLVIRTKSVEFM) are Cytoplasmic-facing. A helical transmembrane segment spans residues 168-188 (PFSLSFFLVLSAVIWFLYGLL). The Extracellular segment spans residues 189–191 (KKD). A helical membrane pass occupies residues 192 to 212 (VFVALPNVLGFVFGVAQMALY). Residues 213-319 (MAYRSKKPLV…KPDMAIVVEV (107 aa)) lie on the Cytoplasmic side of the membrane.

It belongs to the SWEET sugar transporter family. In terms of assembly, forms homooligomers and/or heterooligomers.

It is found in the cell membrane. Its function is as follows. Mediates both low-affinity uptake and efflux of sugar across the plasma membrane. This chain is Bidirectional sugar transporter SWEET15 (SWEET15), found in Oryza sativa subsp. indica (Rice).